The chain runs to 77 residues: Large ribosomal subunit protein bL28 (77 aa).

This sequence belongs to the bacterial ribosomal protein bL28 family.

In Acidovorax ebreus (strain TPSY) (Diaphorobacter sp. (strain TPSY)), this protein is Large ribosomal subunit protein bL28.